We begin with the raw amino-acid sequence, 435 residues long: MDTIQEKYMDNYLKFSGCGCDNFKVERTLNSLLQPLQIDSSDFIKFVTYGGCWINEHCLPSWPYFLDRCSTISEFLSFWCGIVWDTRRTQVHKFKLIKLTQCLFRAYIVVVWVVFPKCRLDFKPKKFLENVWYKYINMPFYKAIVTFMLNLNISIKHPLIQFQSCLPWDLSILRRKNKLFCSTLMPLSVPAPSQRRENENLFVHSDFDDQSHEFALMAALKQQGAMVPCGNPLDAMIKVLCFNSMIQNKYAIIPMDNIEKTENFDLVLKILGYNILSSVFGLPIICKKIKDKIIKNTYSQHIIVCIECGHCLNFGRGKSKNLNFPPTHVFYCRDQKIKQFTICGTSGRIYCSYCGCSQFRKFPMVEANIIRAVIANNAACMAQCASQQFDVVVPCLGMCGSCIFKRVTVQSLLYLTSKIESLCCVKCSGVIYNYA.

It belongs to the herpesviridae UL49 family.

This is an uncharacterized protein from Saimiriine herpesvirus 2 (strain 11) (SaHV-2).